The following is a 502-amino-acid chain: ATP synthase subunit alpha (502 aa).

G169 to T176 serves as a coordination point for ATP.

This sequence belongs to the ATPase alpha/beta chains family. F-type ATPases have 2 components, CF(1) - the catalytic core - and CF(0) - the membrane proton channel. CF(1) has five subunits: alpha(3), beta(3), gamma(1), delta(1), epsilon(1). CF(0) has three main subunits: a(1), b(2) and c(9-12). The alpha and beta chains form an alternating ring which encloses part of the gamma chain. CF(1) is attached to CF(0) by a central stalk formed by the gamma and epsilon chains, while a peripheral stalk is formed by the delta and b chains.

It localises to the cell inner membrane. The enzyme catalyses ATP + H2O + 4 H(+)(in) = ADP + phosphate + 5 H(+)(out). Produces ATP from ADP in the presence of a proton gradient across the membrane. The alpha chain is a regulatory subunit. The polypeptide is ATP synthase subunit alpha (Nitratidesulfovibrio vulgaris (strain DSM 19637 / Miyazaki F) (Desulfovibrio vulgaris)).